The primary structure comprises 309 residues: Acetyl-coenzyme A carboxylase carboxyl transferase subunit beta (309 aa).

The CoA carboxyltransferase N-terminal domain occupies 27-296 (LWKKCPKCGA…PGTEAPIEFE (270 aa)). Zn(2+)-binding residues include Cys31, Cys34, Cys50, and Cys53. The segment at 31–53 (CPKCGAFLYKPELEKNLDVCPKC) adopts a C4-type zinc-finger fold. The tract at residues 288 to 309 (GTEAPIEFEVTEKPDVDEPEGQ) is disordered.

This sequence belongs to the AccD/PCCB family. Acetyl-CoA carboxylase is a heterohexamer composed of biotin carboxyl carrier protein (AccB), biotin carboxylase (AccC) and two subunits each of ACCase subunit alpha (AccA) and ACCase subunit beta (AccD). The cofactor is Zn(2+).

The protein resides in the cytoplasm. The enzyme catalyses N(6)-carboxybiotinyl-L-lysyl-[protein] + acetyl-CoA = N(6)-biotinyl-L-lysyl-[protein] + malonyl-CoA. It participates in lipid metabolism; malonyl-CoA biosynthesis; malonyl-CoA from acetyl-CoA: step 1/1. Functionally, component of the acetyl coenzyme A carboxylase (ACC) complex. Biotin carboxylase (BC) catalyzes the carboxylation of biotin on its carrier protein (BCCP) and then the CO(2) group is transferred by the transcarboxylase to acetyl-CoA to form malonyl-CoA. In Marinobacter nauticus (strain ATCC 700491 / DSM 11845 / VT8) (Marinobacter aquaeolei), this protein is Acetyl-coenzyme A carboxylase carboxyl transferase subunit beta.